The primary structure comprises 201 residues: NADH-quinone oxidoreductase subunit C (201 aa).

It belongs to the complex I 30 kDa subunit family. As to quaternary structure, NDH-1 is composed of 14 different subunits. Subunits NuoB, C, D, E, F, and G constitute the peripheral sector of the complex.

The protein resides in the cell inner membrane. It catalyses the reaction a quinone + NADH + 5 H(+)(in) = a quinol + NAD(+) + 4 H(+)(out). Functionally, NDH-1 shuttles electrons from NADH, via FMN and iron-sulfur (Fe-S) centers, to quinones in the respiratory chain. The immediate electron acceptor for the enzyme in this species is believed to be ubiquinone. Couples the redox reaction to proton translocation (for every two electrons transferred, four hydrogen ions are translocated across the cytoplasmic membrane), and thus conserves the redox energy in a proton gradient. This Mesorhizobium japonicum (strain LMG 29417 / CECT 9101 / MAFF 303099) (Mesorhizobium loti (strain MAFF 303099)) protein is NADH-quinone oxidoreductase subunit C.